A 599-amino-acid chain; its full sequence is Thiamine transporter THI72 (599 aa).

11 helical membrane passes run 42–62 (WGFWSNFAYWGVLSFNVGMWI), 78–98 (IGAFIIADLLTILFALANSCP), 112–132 (FVFGIYGSALGIIIRILMSIV), 174–194 (LIGFIIFHILTAFCYFMKPYH), 197–217 (YILIWSCVGTFFAMLGMVIYL), 280–300 (IVALLIPATLIPVFGIIGASA), 333–353 (FFCGFCFVMSQISYTISNCGF), 372–392 (GAIFAACVSWACLPWNFYNSS), 395–415 (FLTVMSSFGVVMTPIITVMIC), 447–467 (AIVAWVCGMAPGLPGIAWEVN), and 484–504 (SFFSFLISFFVYWGLCLLFPF). A disordered region spans residues 553–599 (HEYKPESSDDELPELTKTSSENTKVFEIVHQKDNEKESSTSSEKQIA). Phosphoserine is present on residues S560 and S572. Residues 579–590 (EIVHQKDNEKES) show a composition bias toward basic and acidic residues.

Belongs to the purine-cytosine permease (2.A.39) family.

The protein localises to the membrane. Its function is as follows. Low affinity thiamine transporter responsible for intake of thiamine. It is possible that the primary function is the uptake of closely related compounds and that thiamine transport is a secondary activity of these proteins. The polypeptide is Thiamine transporter THI72 (THI72) (Saccharomyces cerevisiae (strain ATCC 204508 / S288c) (Baker's yeast)).